The primary structure comprises 174 residues: Cathepsin B-like cysteine proteinase 3 (174 aa).

Cystine bridges form between Cys22–Cys55 and Cys30–Cys42. Residues His122 and Asn142 contribute to the active site.

Belongs to the peptidase C1 family.

Its function is as follows. Expression of the protease correlates with blood-feeding and suggests a role for the protease in blood digestion. The chain is Cathepsin B-like cysteine proteinase 3 (CP-3) from Ostertagia ostertagi (Brown stomach worm).